We begin with the raw amino-acid sequence, 353 residues long: Putative actin-28 (353 aa).

This sequence belongs to the actin family.

Its subcellular location is the cytoplasm. The protein localises to the cytoskeleton. It catalyses the reaction ATP + H2O = ADP + phosphate + H(+). Its function is as follows. Actins are highly conserved proteins that are involved in various types of cell motility and are ubiquitously expressed in all eukaryotic cells. Multiple isoforms are involved in various cellular functions such as cytoskeleton structure, cell mobility, chromosome movement and muscle contraction. This Dictyostelium discoideum (Social amoeba) protein is Putative actin-28 (act28).